Consider the following 413-residue polypeptide: Serine hydroxymethyltransferase (413 aa).

Residues Leu115 and 119-121 (GHL) contribute to the (6S)-5,6,7,8-tetrahydrofolate site. At Lys224 the chain carries N6-(pyridoxal phosphate)lysine.

The protein belongs to the SHMT family. As to quaternary structure, homodimer. It depends on pyridoxal 5'-phosphate as a cofactor.

It is found in the cytoplasm. It carries out the reaction (6R)-5,10-methylene-5,6,7,8-tetrahydrofolate + glycine + H2O = (6S)-5,6,7,8-tetrahydrofolate + L-serine. The protein operates within one-carbon metabolism; tetrahydrofolate interconversion. It participates in amino-acid biosynthesis; glycine biosynthesis; glycine from L-serine: step 1/1. Functionally, catalyzes the reversible interconversion of serine and glycine with tetrahydrofolate (THF) serving as the one-carbon carrier. This reaction serves as the major source of one-carbon groups required for the biosynthesis of purines, thymidylate, methionine, and other important biomolecules. Also exhibits THF-independent aldolase activity toward beta-hydroxyamino acids, producing glycine and aldehydes, via a retro-aldol mechanism. The polypeptide is Serine hydroxymethyltransferase (Mycoplasma mycoides subsp. mycoides SC (strain CCUG 32753 / NCTC 10114 / PG1)).